The sequence spans 380 residues: Endonuclease III homolog 2 (380 aa).

The Nuclear localization signal motif lies at 8 to 12 (RKRKH). The interaction with MLH1 stretch occupies residues 15–40 (VDIEEVEVRSKYFKKNERTVELVKEN). Residue lysine 194 forms a Glycyl lysine isopeptide (Lys-Gly) (interchain with G-Cter in SUMO) linkage. The HhH domain maps to 228–252 (FDSDIPYDIEGILSLPGVGPKMGYL). Catalysis depends on lysine 248, which acts as the Nucleophile; for N-glycosylase activity. 4 residues coordinate [4Fe-4S] cluster: cysteine 319, cysteine 326, cysteine 329, and cysteine 335. Residues 376–380 (RHKKK) carry the Nuclear localization signal motif.

The protein belongs to the Nth/MutY family. In terms of assembly, interacts with MLH1. [4Fe-4S] cluster serves as cofactor. Post-translationally, monosumoylated.

It is found in the nucleus. The enzyme catalyses 2'-deoxyribonucleotide-(2'-deoxyribose 5'-phosphate)-2'-deoxyribonucleotide-DNA = a 3'-end 2'-deoxyribonucleotide-(2,3-dehydro-2,3-deoxyribose 5'-phosphate)-DNA + a 5'-end 5'-phospho-2'-deoxyribonucleoside-DNA + H(+). In terms of biological role, bifunctional DNA N-glycosylase with associated apurinic/apyrimidinic (AP) lyase function that catalyzes the first step in base excision repair (BER), the primary repair pathway for the repair of oxidative DNA damage. The DNA N-glycosylase activity releases the damaged DNA base from DNA by cleaving the N-glycosidic bond, leaving an AP site. The AP-lyase activity cleaves the phosphodiester bond 3' to the AP site by a beta-elimination. Primarily recognizes and repairs oxidative base damage of pyrimidines, but also purine-derived lesions, alkylation damage as well as abasic sites. Can also repair the oxidation products of 8-oxoguanine. This Saccharomyces cerevisiae (strain ATCC 204508 / S288c) (Baker's yeast) protein is Endonuclease III homolog 2 (NTG2).